We begin with the raw amino-acid sequence, 359 residues long: Alanine racemase (359 aa).

Lys35 serves as the catalytic Proton acceptor; specific for D-alanine. Lys35 carries the post-translational modification N6-(pyridoxal phosphate)lysine. Substrate is bound at residue Arg130. Tyr255 serves as the catalytic Proton acceptor; specific for L-alanine. Met303 lines the substrate pocket.

This sequence belongs to the alanine racemase family. The cofactor is pyridoxal 5'-phosphate.

The enzyme catalyses L-alanine = D-alanine. The protein operates within amino-acid biosynthesis; D-alanine biosynthesis; D-alanine from L-alanine: step 1/1. In terms of biological role, catalyzes the interconversion of L-alanine and D-alanine. May also act on other amino acids. This chain is Alanine racemase (alr), found in Janthinobacterium sp. (strain Marseille) (Minibacterium massiliensis).